A 518-amino-acid polypeptide reads, in one-letter code: Protein PAC2 (518 aa).

A CAP-Gly domain is found at 23–67 (VIKPWPSVKAYGVEWDDHSRGKHSGTIDDIHYFDVQIPNSGSFLK). LRR repeat units lie at residues 153–174 (NVKD…CEFI), 179–201 (NLES…KEYD), 204–227 (HIKT…LKSF), 229–252 (TLKM…ENEI), 255–276 (TLEE…PKNL), 277–298 (TLKG…AIYS), 299–319 (VESL…DDLN), and 324–345 (SLKN…INVE).

Its subcellular location is the cytoplasm. It is found in the cytoskeleton. Its function is as follows. Required for viability in the absence of the kinesin-related CIN8 mitotic motor. Seems to be involved in the assembly of alpha-tubulin. This chain is Protein PAC2 (PAC2), found in Saccharomyces cerevisiae (strain ATCC 204508 / S288c) (Baker's yeast).